The chain runs to 532 residues: Vesicular acetylcholine transporter unc-17 (532 aa).

The Cytoplasmic portion of the chain corresponds to 1 to 31 (MGFNVPVINRDSEILKADAKKWLEQQDNQKK). A helical membrane pass occupies residues 32–52 (CVLVIVSIALLLDNMLYMVIV). At 53 to 101 (PIIPKYLRDIHNYQVTFEGYHNETSQLANGTYLVREVGGRINFLDEELE) the chain is on the lumenal, vesicle side. Residues Asn-74 and Asn-81 are each glycosylated (N-linked (GlcNAc...) asparagine). A helical membrane pass occupies residues 102 to 121 (LGWLFASKALLQIFVNPFSG). Residues 122-130 (YIIDRVGYE) are Cytoplasmic-facing. Residues 131-151 (IPMILGLCTMFFSTAIFALGK) form a helical membrane-spanning segment. Topologically, residues 152–160 (SYGVLLFAR) are lumenal, vesicle. Residues 161–180 (SLQGFGSAFADTSGLAMIAD) traverse the membrane as a helical segment. At 181–191 (RFTEENERSAA) the chain is on the cytoplasmic side. A helical membrane pass occupies residues 192–213 (LGIALAFISFGCLVAPPFGSVL). The Lumenal, vesicle portion of the chain corresponds to 214-219 (YSLAGK). Residues 220–242 (PVPFLILSFVCLADAIAVFMVIN) traverse the membrane as a helical segment. Residues 243–266 (PHRRGTDSHGEKVQGTPMWRLFMD) are Cytoplasmic-facing. Residues 267 to 286 (PFIACCSGALIMANVSLAFL) form a helical membrane-spanning segment. The Lumenal, vesicle portion of the chain corresponds to 287–303 (EPTITTWMSEMMPDTPG). The helical transmembrane segment at 304–328 (WLVGVIWLPPFFPHVLGVYVTVKML) threads the bilayer. Residues 329–335 (RAFPHHT) lie on the Cytoplasmic side of the membrane. A helical membrane pass occupies residues 336–356 (WAIAMVGLAMEGIACFAIPYT). Topologically, residues 357-367 (TSVMQLVIPLS) are lumenal, vesicle. Residues 368–388 (FVCFGIALIDTSLLPMLGHLV) traverse the membrane as a helical segment. At 389 to 393 (DTRHV) the chain is on the cytoplasmic side. Residues 394-412 (SVYGSVYAIADISYSLAYA) traverse the membrane as a helical segment. Residues 413–418 (FGPIIA) are Lumenal, vesicle-facing. The helical transmembrane segment at 419–440 (GWIVTNWGFTALNIIIFATNVT) threads the bilayer. Over 441–532 (YAPVLFLLRK…AGYDPLNPQW (92 aa)) the chain is Cytoplasmic.

The protein belongs to the major facilitator superfamily. Vesicular transporter family. In terms of tissue distribution, detected in most regions of the nervous system including the nerve ring, the ventral and dorsal nerve cords, and the pharyngeal nervous system. Expressed in most cholinergic neurons. In addition, expressed in SIA, SIB and SMB sublateral motor neurons.

It is found in the cytoplasmic vesicle. Its subcellular location is the secretory vesicle. The protein resides in the synaptic vesicle membrane. In terms of biological role, involved in acetylcholine transport into synaptic vesicles. The polypeptide is Vesicular acetylcholine transporter unc-17 (Caenorhabditis elegans).